The sequence spans 778 residues: MSSGSKEGGGGSPAYHLPHPHPHPPQHAQYVGPYRLEKTLGKGQTGLVKLGVHCITGQKVAVKIVNREKLSESVLMKVEREIAILKLIEHPHVLKLHDVYENKKYLYLVLEHVSGGELFDYLVKKGRLTPKEARKFFRQIVSALDFCHSYSICHRDLKPENLLLDEKNNIRIADFGMASLQVGDSLLETSCGSPHYACPEVIKGEKYDGRRADMWSCGVILFALLVGALPFDDDNLRQLLEKVKRGVFHMPHFIPPDCQSLLRGMIEVEPEKRLSLEQIQKHPWYLGGKHEPDPCLEPAPGRRVAMRSLPSNGELDPDVLESMASLGCFRDRERLHRELRSEEENQEKMIYYLLLDRKERYPSCEDQDLPPRNDVDPPRKRVDSPMLSRHGKRRPERKSMEVLSITDAGSGGSPVPTRRALEMAQHSQRSRSVSGASTGLSSSPLSSPRSPVFSFSPEPGVGDEARGGGSPTSKTQTLPSRGPRGGGAGEQPPPPSARSTPLPGPPGSPRSSGGTPLHSPLHTPRASPTGTPGTTPPPSPGGGVGGAAWRSRLNSIRNSFLGSPRFHRRKMQVPTAEEMSSLTPESSPELAKRSWFGNFISLDKEEQIFLVLKDKPLSSIKADIVHAFLSIPSLSHSVLSQTSFRAEYKASGGPSVFQKPVRFQVDISSSEGPEPSPRRDGSSGGGIYSVTFTLISGPSRRFKRVVETIQAQLLSTHDQPSVQALADEKNGAQTRPAGTPPRSLQPPPGRPDPDLSSSPRRGPSKDKKLLATNGTPLP.

Residues methionine 1–serine 12 show a composition bias toward gly residues. The segment at methionine 1–glutamine 29 is disordered. In terms of domain architecture, Protein kinase spans tyrosine 34–tyrosine 285. ATP-binding positions include leucine 40–valine 48 and lysine 63. The Proton acceptor role is filled by aspartate 156. Residue threonine 189 is modified to Phosphothreonine; by LKB1. Serine 193 is subject to Phosphoserine. The 43-residue stretch at glutamate 314–aspartate 356 folds into the UBA domain. Over residues proline 362–aspartate 383 the composition is skewed to basic and acidic residues. A disordered region spans residues proline 362–alanine 548. Serine 399, serine 443, serine 447, and serine 450 each carry phosphoserine. The span at serine 430 to proline 457 shows a compositional bias: low complexity. Omega-N-methylarginine occurs at positions 466, 481, 484, and 498. Over residues glutamine 491–serine 508 the composition is skewed to pro residues. The residue at position 508 (serine 508) is a Phosphoserine. Low complexity predominate over residues proline 509–glycine 533. Arginine 525 carries the omega-N-methylarginine modification. Threonine 529 and threonine 535 each carry phosphothreonine. Omega-N-methylarginine is present on arginine 550. Threonine 583 carries the post-translational modification Phosphothreonine. Residues serine 586, serine 587, and serine 601 each carry the phosphoserine modification. Positions glutamine 719 to proline 778 are disordered.

Belongs to the protein kinase superfamily. CAMK Ser/Thr protein kinase family. SNF1 subfamily. Requires Mg(2+) as cofactor. Phosphorylated at Thr-189 by STK11/LKB1 in complex with STE20-related adapter-alpha (STRADA) pseudo kinase and CAB39. Not phosphorylated at Thr-189 by CaMKK2. In contrast, it is phosphorylated and activated by CaMKK1. May be inactivated via dephosphorylation of Thr-189 by PP2C. May be autophosphorylated. As to expression, mainly present in brain. Present in presynaptic nerve terminals (at protein level).

The protein resides in the cytoplasm. Its subcellular location is the nucleus. It is found in the cytoskeleton. It localises to the microtubule organizing center. The protein localises to the centrosome. The protein resides in the synapse. Its subcellular location is the presynaptic active zone. It is found in the cytoplasmic vesicle. It localises to the secretory vesicle. The protein localises to the synaptic vesicle. The enzyme catalyses L-seryl-[protein] + ATP = O-phospho-L-seryl-[protein] + ADP + H(+). It carries out the reaction L-threonyl-[protein] + ATP = O-phospho-L-threonyl-[protein] + ADP + H(+). The catalysed reaction is L-seryl-[tau protein] + ATP = O-phospho-L-seryl-[tau protein] + ADP + H(+). It catalyses the reaction L-threonyl-[tau protein] + ATP = O-phospho-L-threonyl-[tau protein] + ADP + H(+). With respect to regulation, activated by phosphorylation on Thr-189 by STK11/LKB1. Serine/threonine-protein kinase that plays a key role in polarization of neurons and centrosome duplication. Phosphorylates CDC25B, CDC25C, MAPT/TAU, RIMS1, TUBG1, TUBG2 and WEE1. Following phosphorylation and activation by STK11/LKB1, acts as a key regulator of polarization of cortical neurons, probably by mediating phosphorylation of microtubule-associated proteins such as MAPT/TAU at 'Thr-523' and 'Ser-573'. Also regulates neuron polarization by mediating phosphorylation of WEE1 at 'Ser-642' in postmitotic neurons, leading to down-regulate WEE1 activity in polarized neurons. Also acts as a positive regulator of centrosome duplication by mediating phosphorylation of gamma-tubulin (TUBG1 and TUBG2) at 'Ser-131', leading to translocation of gamma-tubulin and its associated proteins to the centrosome. Involved in the UV-induced DNA damage checkpoint response, probably by inhibiting CDK1 activity through phosphorylation and activation of WEE1, and inhibition of CDC25B and CDC25C. In neurons, localizes to synaptic vesicles and plays a role in neurotransmitter release, possibly by phosphorylating RIMS1. The protein is Serine/threonine-protein kinase BRSK1 (Brsk1) of Rattus norvegicus (Rat).